The sequence spans 465 residues: Ribulose bisphosphate carboxylase large chain (465 aa).

Residue K4 is modified to N6,N6,N6-trimethyllysine. The substrate site is built by N113 and T163. K165 serves as the catalytic Proton acceptor. K167 is a substrate binding site. Mg(2+) is bound by residues K191, D193, and E194. K191 bears the N6-carboxylysine mark. The active-site Proton acceptor is H284. The substrate site is built by R285, H317, and S369.

This sequence belongs to the RuBisCO large chain family. Type I subfamily. Heterohexadecamer of 8 large chains and 8 small chains; disulfide-linked. The disulfide link is formed within the large subunit homodimers. Requires Mg(2+) as cofactor. Post-translationally, the disulfide bond which can form in the large chain dimeric partners within the hexadecamer appears to be associated with oxidative stress and protein turnover.

The protein resides in the plastid. It localises to the chloroplast. It carries out the reaction 2 (2R)-3-phosphoglycerate + 2 H(+) = D-ribulose 1,5-bisphosphate + CO2 + H2O. The enzyme catalyses D-ribulose 1,5-bisphosphate + O2 = 2-phosphoglycolate + (2R)-3-phosphoglycerate + 2 H(+). In terms of biological role, ruBisCO catalyzes two reactions: the carboxylation of D-ribulose 1,5-bisphosphate, the primary event in carbon dioxide fixation, as well as the oxidative fragmentation of the pentose substrate in the photorespiration process. Both reactions occur simultaneously and in competition at the same active site. The polypeptide is Ribulose bisphosphate carboxylase large chain (Ephedra tweediana (Vining horsetail)).